Here is a 303-residue protein sequence, read N- to C-terminus: UDP-3-O-acyl-N-acetylglucosamine deacetylase (303 aa).

Zn(2+)-binding residues include His78, His237, and Asp241. The active-site Proton donor is His264.

The protein belongs to the LpxC family. Zn(2+) is required as a cofactor.

The enzyme catalyses a UDP-3-O-[(3R)-3-hydroxyacyl]-N-acetyl-alpha-D-glucosamine + H2O = a UDP-3-O-[(3R)-3-hydroxyacyl]-alpha-D-glucosamine + acetate. Its pathway is glycolipid biosynthesis; lipid IV(A) biosynthesis; lipid IV(A) from (3R)-3-hydroxytetradecanoyl-[acyl-carrier-protein] and UDP-N-acetyl-alpha-D-glucosamine: step 2/6. Its function is as follows. Catalyzes the hydrolysis of UDP-3-O-myristoyl-N-acetylglucosamine to form UDP-3-O-myristoylglucosamine and acetate, the committed step in lipid A biosynthesis. The protein is UDP-3-O-acyl-N-acetylglucosamine deacetylase of Xanthomonas euvesicatoria pv. vesicatoria (strain 85-10) (Xanthomonas campestris pv. vesicatoria).